The primary structure comprises 308 residues: Tetraacyldisaccharide 4'-kinase (308 aa).

ATP is bound at residue 63 to 70; that stretch reads SFGGNGKT.

The protein belongs to the LpxK family.

The enzyme catalyses a lipid A disaccharide + ATP = a lipid IVA + ADP + H(+). It participates in glycolipid biosynthesis; lipid IV(A) biosynthesis; lipid IV(A) from (3R)-3-hydroxytetradecanoyl-[acyl-carrier-protein] and UDP-N-acetyl-alpha-D-glucosamine: step 6/6. In terms of biological role, transfers the gamma-phosphate of ATP to the 4'-position of a tetraacyldisaccharide 1-phosphate intermediate (termed DS-1-P) to form tetraacyldisaccharide 1,4'-bis-phosphate (lipid IVA). This Campylobacter jejuni subsp. doylei (strain ATCC BAA-1458 / RM4099 / 269.97) protein is Tetraacyldisaccharide 4'-kinase.